Reading from the N-terminus, the 178-residue chain is Fluoride-specific ion channel FluC 2 (178 aa).

4 helical membrane passes run 25–45, 63–83, 97–117, and 129–149; these read PDIHLDIVLVVFCGGAIGTAI, FVANMLACFCYAGLTAYLAGA, GLGMGVCGGLSTMSTLALEGF, and IAYLLVTFALGLVCASAGVWA. Residues glycine 104 and serine 107 each contribute to the Na(+) site.

The protein belongs to the fluoride channel Fluc/FEX (TC 1.A.43) family.

The protein resides in the cell membrane. It carries out the reaction fluoride(in) = fluoride(out). With respect to regulation, na(+) is not transported, but it plays an essential structural role and its presence is essential for fluoride channel function. Functionally, fluoride-specific ion channel. Important for reducing fluoride concentration in the cell, thus reducing its toxicity. The polypeptide is Fluoride-specific ion channel FluC 2 (Bifidobacterium longum (strain NCC 2705)).